Consider the following 360-residue polypeptide: Phosphoserine aminotransferase (360 aa).

R42 serves as a coordination point for L-glutamate. Pyridoxal 5'-phosphate contacts are provided by residues 76–77, W102, T152, D172, and Q195; that span reads AS. K196 carries the N6-(pyridoxal phosphate)lysine modification. A pyridoxal 5'-phosphate-binding site is contributed by 237–238; the sequence is NT.

This sequence belongs to the class-V pyridoxal-phosphate-dependent aminotransferase family. SerC subfamily. Homodimer. It depends on pyridoxal 5'-phosphate as a cofactor.

It localises to the cytoplasm. It catalyses the reaction O-phospho-L-serine + 2-oxoglutarate = 3-phosphooxypyruvate + L-glutamate. It carries out the reaction 4-(phosphooxy)-L-threonine + 2-oxoglutarate = (R)-3-hydroxy-2-oxo-4-phosphooxybutanoate + L-glutamate. It functions in the pathway amino-acid biosynthesis; L-serine biosynthesis; L-serine from 3-phospho-D-glycerate: step 2/3. Catalyzes the reversible conversion of 3-phosphohydroxypyruvate to phosphoserine and of 3-hydroxy-2-oxo-4-phosphonooxybutanoate to phosphohydroxythreonine. The protein is Phosphoserine aminotransferase of Bacillus cereus (strain ATCC 10987 / NRS 248).